We begin with the raw amino-acid sequence, 405 residues long: Arginine biosynthesis bifunctional protein ArgJ (405 aa).

The substrate site is built by threonine 152, lysine 178, threonine 189, glutamate 276, asparagine 400, and threonine 405. The active-site Nucleophile is threonine 189.

Belongs to the ArgJ family. Heterotetramer of two alpha and two beta chains.

The protein resides in the cytoplasm. The enzyme catalyses N(2)-acetyl-L-ornithine + L-glutamate = N-acetyl-L-glutamate + L-ornithine. It catalyses the reaction L-glutamate + acetyl-CoA = N-acetyl-L-glutamate + CoA + H(+). It functions in the pathway amino-acid biosynthesis; L-arginine biosynthesis; L-ornithine and N-acetyl-L-glutamate from L-glutamate and N(2)-acetyl-L-ornithine (cyclic): step 1/1. It participates in amino-acid biosynthesis; L-arginine biosynthesis; N(2)-acetyl-L-ornithine from L-glutamate: step 1/4. Functionally, catalyzes two activities which are involved in the cyclic version of arginine biosynthesis: the synthesis of N-acetylglutamate from glutamate and acetyl-CoA as the acetyl donor, and of ornithine by transacetylation between N(2)-acetylornithine and glutamate. The protein is Arginine biosynthesis bifunctional protein ArgJ of Pseudomonas aeruginosa (strain ATCC 15692 / DSM 22644 / CIP 104116 / JCM 14847 / LMG 12228 / 1C / PRS 101 / PAO1).